Reading from the N-terminus, the 250-residue chain is GTP cyclohydrolase 1 type 2 homolog (250 aa).

Positions 63, 64, 100, 218, and 222 each coordinate a divalent metal cation.

It belongs to the GTP cyclohydrolase I type 2/NIF3 family. In terms of assembly, homohexamer.

The chain is GTP cyclohydrolase 1 type 2 homolog from Pyrococcus abyssi (strain GE5 / Orsay).